The sequence spans 198 residues: Large ribosomal subunit protein bL21 (198 aa).

The protein belongs to the bacterial ribosomal protein bL21 family. As to quaternary structure, part of the 50S ribosomal subunit. Contacts protein L20.

In terms of biological role, this protein binds to 23S rRNA in the presence of protein L20. In Ruegeria sp. (strain TM1040) (Silicibacter sp.), this protein is Large ribosomal subunit protein bL21.